The chain runs to 237 residues: Ribonuclease PH (237 aa).

Residues arginine 86 and 124–126 (GTR) contribute to the phosphate site.

It belongs to the RNase PH family. As to quaternary structure, homohexameric ring arranged as a trimer of dimers.

It catalyses the reaction tRNA(n+1) + phosphate = tRNA(n) + a ribonucleoside 5'-diphosphate. Functionally, phosphorolytic 3'-5' exoribonuclease that plays an important role in tRNA 3'-end maturation. Removes nucleotide residues following the 3'-CCA terminus of tRNAs; can also add nucleotides to the ends of RNA molecules by using nucleoside diphosphates as substrates, but this may not be physiologically important. Probably plays a role in initiation of 16S rRNA degradation (leading to ribosome degradation) during starvation. The sequence is that of Ribonuclease PH from Shewanella oneidensis (strain ATCC 700550 / JCM 31522 / CIP 106686 / LMG 19005 / NCIMB 14063 / MR-1).